The sequence spans 71 residues: Conotoxin Lt11.3 (71 aa).

The N-terminal stretch at 1 to 26 (MMFRLTSVGCILLVIAFLNLVGLTNA) is a signal peptide. 4 cysteine pairs are disulfide-bonded: cysteine 27-cysteine 41, cysteine 34-cysteine 46, cysteine 40-cysteine 50, and cysteine 45-cysteine 54. Proline amide is present on proline 57. A propeptide spanning residues 61–71 (TRLQGFFKHRR) is cleaved from the precursor.

The protein belongs to the conotoxin I2 superfamily. In terms of tissue distribution, expressed by the venom duct.

The protein localises to the secreted. In terms of biological role, probable neurotoxin. The sequence is that of Conotoxin Lt11.3 from Conus litteratus (Lettered cone).